A 176-amino-acid polypeptide reads, in one-letter code: Ribonuclease mitogillin (176 aa).

Positions Met-1–Arg-27 are cleaved as a signal peptide. 2 cysteine pairs are disulfide-bonded: Cys-32–Cys-174 and Cys-102–Cys-158. His-76 is an active-site residue. The Proton acceptor role is filled by Glu-122. The active-site Proton donor is His-163.

This sequence belongs to the ribonuclease U2 family.

The protein localises to the secreted. Functionally, this purine-specific ribonuclease cleaves 28S RNA in eukaryotic ribosomes, inhibits protein synthesis, and shows antitumor activity. In Aspergillus fumigatus (strain ATCC MYA-4609 / CBS 101355 / FGSC A1100 / Af293) (Neosartorya fumigata), this protein is Ribonuclease mitogillin (mitF).